Here is a 311-residue protein sequence, read N- to C-terminus: Manganese-dependent ADP-ribose/CDP-alcohol diphosphatase (311 aa).

Asp-17, Gln-19, Asp-64, Asn-99, His-218, His-255, and His-257 together coordinate Zn(2+).

Belongs to the ADPRibase-Mn family. Monomer. Mg(2+) is required as a cofactor.

The catalysed reaction is CDP-choline + H2O = phosphocholine + CMP + 2 H(+). It carries out the reaction ADP-D-ribose + H2O = D-ribose 5-phosphate + AMP + 2 H(+). It catalyses the reaction CDP-glycerol + H2O = sn-glycerol 3-phosphate + CMP + 2 H(+). Functionally, hydrolyzes ADP-ribose, IDP-ribose, CDP-glycerol, CDP-choline and CDP-ethanolamine, but not other non-reducing ADP-sugars or CDP-glucose. This Arabidopsis thaliana (Mouse-ear cress) protein is Manganese-dependent ADP-ribose/CDP-alcohol diphosphatase.